The sequence spans 361 residues: Cytosolic Fe-S cluster assembly factor CFD1 (361 aa).

G37–S44 serves as a coordination point for ATP. Residues C218 and C221 each contribute to the [4Fe-4S] cluster site. Positions H293–G314 are disordered.

Belongs to the Mrp/NBP35 ATP-binding proteins family. NUBP2/CFD1 subfamily. As to quaternary structure, heterotetramer of 2 NBP35 and 2 CFD1 chains. The cofactor is [4Fe-4S] cluster.

The protein resides in the cytoplasm. Its function is as follows. Component of the cytosolic iron-sulfur (Fe/S) protein assembly (CIA) machinery. Required for maturation of extramitochondrial Fe-S proteins. The NBP35-CFD1 heterotetramer forms a Fe-S scaffold complex, mediating the de novo assembly of an Fe-S cluster and its transfer to target apoproteins. This Mycosarcoma maydis (Corn smut fungus) protein is Cytosolic Fe-S cluster assembly factor CFD1.